The following is a 261-amino-acid chain: Carbonic anhydrase 1 (261 aa).

A disordered region spans residues 1 to 31; it reads MASPDWGYDDKNGPEQWSKLYPIANGNNQSP. Alanine 2 is subject to N-acetylalanine. The region spanning 4-261 is the Alpha-carbonic anhydrase domain; it reads PDWGYDDKNG…LKGRTVRASF (258 aa). Histidine 65 functions as the Proton donor/acceptor in the catalytic mechanism. Zn(2+) contacts are provided by histidine 65, histidine 68, histidine 95, histidine 97, and histidine 120. Residues threonine 200 and 200–201 each bind substrate; that span reads TH. Histidine 201 is a Zn(2+) binding site. A disordered region spans residues 241–261; sequence PMQHNNRPTQPLKGRTVRASF.

It belongs to the alpha-carbonic anhydrase family. The cofactor is Zn(2+).

The protein localises to the cytoplasm. The catalysed reaction is hydrogencarbonate + H(+) = CO2 + H2O. It carries out the reaction urea = cyanamide + H2O. With respect to regulation, activated by histamine, imidazole, L-adrenaline, L- and D-histidine, and L- and D-phenylalanine. Inhibited by coumarins, sulfonamide derivatives such as acetazolamide, benzenesulfonamide and derivatives (4-carboxyethylbenzene-sulfonamide, 4-carboxyethylbenzene-sulfonamide ethyl ester, 4-(acetyl-2-aminoethyl)benzene-sulfonamide, 4-aminoethylbenzene-sulfonamide), and 'prong inhibitors' BR15, BR17, BR22 and BR30. Activated by a short exposition to Foscarnet (phosphonoformate trisodium salt), but inhibited by a long one. Esterase activity weakly reduced by cyanamide. In terms of biological role, catalyzes the reversible hydration of carbon dioxide. Can hydrate cyanamide to urea. This Homo sapiens (Human) protein is Carbonic anhydrase 1 (CA1).